The chain runs to 202 residues: Cytochrome c oxidase assembly protein CtaG (202 aa).

Over 1–14 (MTSPANPSEVTRDR) the chain is Cytoplasmic. A helical; Signal-anchor for type II membrane protein membrane pass occupies residues 15–37 (RNRGVAFVCAGVFVAMVGMSFAA). The Periplasmic portion of the chain corresponds to 38–202 (VPLYRLFCQV…GAAKTQKLGG (165 aa)).

Belongs to the COX11/CtaG family.

It localises to the cell inner membrane. In terms of biological role, exerts its effect at some terminal stage of cytochrome c oxidase synthesis, probably by being involved in the insertion of the copper B into subunit I. In Chelativorans sp. (strain BNC1), this protein is Cytochrome c oxidase assembly protein CtaG.